A 729-amino-acid polypeptide reads, in one-letter code: Dipeptidyl peptidase 3 (729 aa).

His459 is a binding site for Zn(2+). The active site involves Glu460. Residues His464 and Glu517 each coordinate Zn(2+).

This sequence belongs to the peptidase M49 family. Zn(2+) serves as cofactor.

It localises to the cytoplasm. The catalysed reaction is Release of an N-terminal dipeptide from a peptide comprising four or more residues, with broad specificity. Also acts on dipeptidyl 2-naphthylamides.. The chain is Dipeptidyl peptidase 3 (dpp3) from Nematostella vectensis (Starlet sea anemone).